The chain runs to 191 residues: Peptidyl-tRNA hydrolase (191 aa).

TRNA is bound at residue Tyr-17. The active-site Proton acceptor is the His-22. Residues Tyr-68, Asn-70, and Asn-116 each coordinate tRNA.

It belongs to the PTH family. Monomer.

It is found in the cytoplasm. It catalyses the reaction an N-acyl-L-alpha-aminoacyl-tRNA + H2O = an N-acyl-L-amino acid + a tRNA + H(+). In terms of biological role, hydrolyzes ribosome-free peptidyl-tRNAs (with 1 or more amino acids incorporated), which drop off the ribosome during protein synthesis, or as a result of ribosome stalling. Its function is as follows. Catalyzes the release of premature peptidyl moieties from peptidyl-tRNA molecules trapped in stalled 50S ribosomal subunits, and thus maintains levels of free tRNAs and 50S ribosomes. This Francisella tularensis subsp. holarctica (strain FTNF002-00 / FTA) protein is Peptidyl-tRNA hydrolase.